Here is a 128-residue protein sequence, read N- to C-terminus: Ribosome-binding factor A (128 aa).

The protein belongs to the RbfA family. Monomer. Binds 30S ribosomal subunits, but not 50S ribosomal subunits or 70S ribosomes.

It localises to the cytoplasm. Functionally, one of several proteins that assist in the late maturation steps of the functional core of the 30S ribosomal subunit. Associates with free 30S ribosomal subunits (but not with 30S subunits that are part of 70S ribosomes or polysomes). Required for efficient processing of 16S rRNA. May interact with the 5'-terminal helix region of 16S rRNA. In Rippkaea orientalis (strain PCC 8801 / RF-1) (Cyanothece sp. (strain PCC 8801)), this protein is Ribosome-binding factor A.